The primary structure comprises 551 residues: Glucose-6-phosphate isomerase (551 aa).

Residue E349 is the Proton donor of the active site. Active-site residues include H378 and K480.

This sequence belongs to the GPI family.

Its subcellular location is the cytoplasm. It carries out the reaction alpha-D-glucose 6-phosphate = beta-D-fructose 6-phosphate. It participates in carbohydrate biosynthesis; gluconeogenesis. Its pathway is carbohydrate degradation; glycolysis; D-glyceraldehyde 3-phosphate and glycerone phosphate from D-glucose: step 2/4. Functionally, catalyzes the reversible isomerization of glucose-6-phosphate to fructose-6-phosphate. This Prochlorococcus marinus (strain MIT 9313) protein is Glucose-6-phosphate isomerase.